Here is a 117-residue protein sequence, read N- to C-terminus: Large ribosomal subunit protein uL18 (117 aa).

Belongs to the universal ribosomal protein uL18 family. Part of the 50S ribosomal subunit; part of the 5S rRNA/L5/L18/L25 subcomplex. Contacts the 5S and 23S rRNAs.

In terms of biological role, this is one of the proteins that bind and probably mediate the attachment of the 5S RNA into the large ribosomal subunit, where it forms part of the central protuberance. The protein is Large ribosomal subunit protein uL18 of Blochmanniella floridana.